An 816-amino-acid polypeptide reads, in one-letter code: Larval serum protein 1 alpha chain (816 aa).

The first 16 residues, 1–16 (MKFAIAFLACVAVVTA), serve as a signal peptide directing secretion.

It belongs to the hemocyanin family. Heterohexamer, composed of three subunits, alpha, beta and gamma. As to expression, larval hemolymph.

Its subcellular location is the secreted. The protein resides in the extracellular space. In terms of biological role, larval storage protein (LSP) which may serve as a store of amino acids for synthesis of adult proteins. In Drosophila melanogaster (Fruit fly), this protein is Larval serum protein 1 alpha chain (Lsp1alpha).